The following is a 114-amino-acid chain: MHELSIAHNIVTIASDAAAEAGVDRISAVHLRIGALAGVVADALRFSFAIAAEGTPLAGAELIIEEVPVVVFCPDCNAEVTLTNPRLFRCPRCDRPCGQIVHGRELELVALETP.

H2 is a Ni(2+) binding site. 4 residues coordinate Zn(2+): C73, C76, C90, and C93.

Belongs to the HypA/HybF family.

Involved in the maturation of [NiFe] hydrogenases. Required for nickel insertion into the metal center of the hydrogenase. In Chloroflexus aurantiacus (strain ATCC 29366 / DSM 635 / J-10-fl), this protein is Hydrogenase maturation factor HypA.